The sequence spans 490 residues: Betaine aldehyde dehydrogenase (490 aa).

Residue aspartate 93 coordinates K(+). 150-152 (GAW) contacts NAD(+). Lysine 162 serves as the catalytic Charge relay system. 176 to 179 (KPSE) serves as a coordination point for NAD(+). Valine 180 is a K(+) binding site. 230-233 (GIAS) contacts NAD(+). Leucine 246 contributes to the K(+) binding site. Glutamate 252 functions as the Proton acceptor in the catalytic mechanism. NAD(+) contacts are provided by glycine 254, cysteine 286, and glutamate 387. The active-site Nucleophile is the cysteine 286. Cysteine 286 bears the Cysteine sulfenic acid (-SOH) mark. K(+) is bound by residues lysine 457 and glycine 460. Glutamate 464 acts as the Charge relay system in catalysis.

It belongs to the aldehyde dehydrogenase family. Dimer of dimers. Requires K(+) as cofactor.

The catalysed reaction is betaine aldehyde + NAD(+) + H2O = glycine betaine + NADH + 2 H(+). Its pathway is amine and polyamine biosynthesis; betaine biosynthesis via choline pathway; betaine from betaine aldehyde: step 1/1. In terms of biological role, involved in the biosynthesis of the osmoprotectant glycine betaine. Catalyzes the irreversible oxidation of betaine aldehyde to the corresponding acid. The protein is Betaine aldehyde dehydrogenase of Pectobacterium carotovorum subsp. carotovorum (strain PC1).